An 837-amino-acid polypeptide reads, in one-letter code: V-type proton ATPase 116 kDa subunit a 1 (837 aa).

The Cytoplasmic segment spans residues 1–388 (MGELFRSEEM…DAYGIGTYRE (388 aa)). Residues Thr-250 and Thr-360 each carry the phosphothreonine modification. Tyr-364 is modified (phosphotyrosine). The helical transmembrane segment at 389–407 (INPAPYTIITFPFLFAVMF) threads the bilayer. Topologically, residues 408–409 (GD) are vacuolar. A helical transmembrane segment spans residues 410-426 (FGHGILMTLFAVWMVLR). The Cytoplasmic segment spans residues 427–441 (ESRILSQKNENEMFS). Residues 442–471 (TVFSGRYIILLMGVFSMYTGLIYNDCFSKS) form a helical membrane-spanning segment. Residues 472-534 (LNIFGSSWSV…ATNKLTFLNS (63 aa)) lie on the Vacuolar side of the membrane. The helical transmembrane segment at 535–554 (FKMKMSVILGIIHMLFGVSL) threads the bilayer. Over 555–572 (SLFNHIYFKKPLNIYFGF) the chain is Cytoplasmic. The helical transmembrane segment at 573–593 (IPEIIFMTSLFGYLVILIFYK) threads the bilayer. Over 594–638 (WTAYDAHTSENAPSLLIHFINMFLFSYPESGYSMLYSGQKGIQCF) the chain is Vacuolar. The helical transmembrane segment at 639-658 (LVVVALLCVPWMLLFKPLVL) threads the bilayer. Topologically, residues 659–724 (RRQYLRRKHL…ATMVHQAIHT (66 aa)) are cytoplasmic. A helical transmembrane segment spans residues 725 to 749 (IEYCLGCISNTASYLRLWALSLAHA). The Vacuolar segment spans residues 750-770 (QLSEVLWTMVIHIGLSVKSLA). Residues 771–809 (GGLVLFFFFTAFATLTVAILLIMEGLSAFLHALRLHWVE) traverse the membrane as a helical segment. Over 810–837 (FQNKFYSGTGFKFLPFSFEHIREGKFGE) the chain is Cytoplasmic.

This sequence belongs to the V-ATPase 116 kDa subunit family. In terms of assembly, V-ATPase is a heteromultimeric enzyme made up of two complexes: the ATP-hydrolytic V1 complex and the proton translocation V0 complex. The V1 complex consists of three catalytic AB heterodimers that form a heterohexamer, three peripheral stalks each consisting of EG heterodimers, one central rotor including subunits D and F, and the regulatory subunits C and H. The proton translocation complex V0 consists of the proton transport subunit a, a ring of proteolipid subunits c9c'', rotary subunit d, subunits e and f, and the accessory subunits ATP6AP1/Ac45 and ATP6AP2/PRR. Interacts with SPAAR.

The protein localises to the cytoplasmic vesicle. Its subcellular location is the clathrin-coated vesicle membrane. It is found in the secretory vesicle. It localises to the synaptic vesicle membrane. The protein resides in the melanosome. Subunit of the V0 complex of vacuolar(H+)-ATPase (V-ATPase), a multisubunit enzyme composed of a peripheral complex (V1) that hydrolyzes ATP and a membrane integral complex (V0) that translocates protons. V-ATPase is responsible for the acidification of various organelles, such as lysosomes, endosomes, the trans-Golgi network, and secretory granules, including synaptic vesicles. In certain cell types, can be exported to the plasma membrane, where it is involved in the acidification of the extracellular environment. Required for assembly and activity of the vacuolar ATPase. Through its action on compartment acidification, plays an essential role in neuronal development in terms of integrity and connectivity of neurons. The polypeptide is V-type proton ATPase 116 kDa subunit a 1 (ATP6V0A1) (Pongo abelii (Sumatran orangutan)).